Reading from the N-terminus, the 242-residue chain is tRNA (guanine-N(1)-)-methyltransferase (242 aa).

S-adenosyl-L-methionine contacts are provided by residues Gly112 and 131 to 136; that span reads LGDFIL.

Belongs to the RNA methyltransferase TrmD family. Homodimer.

It is found in the cytoplasm. The catalysed reaction is guanosine(37) in tRNA + S-adenosyl-L-methionine = N(1)-methylguanosine(37) in tRNA + S-adenosyl-L-homocysteine + H(+). In terms of biological role, specifically methylates guanosine-37 in various tRNAs. The protein is tRNA (guanine-N(1)-)-methyltransferase of Crocosphaera subtropica (strain ATCC 51142 / BH68) (Cyanothece sp. (strain ATCC 51142)).